Here is a 466-residue protein sequence, read N- to C-terminus: Cysteine--tRNA ligase (466 aa).

A Zn(2+)-binding site is contributed by C30. The 'HIGH' region motif lies at 32–42; it reads PTVYNYIHIGN. C210, H235, and E239 together coordinate Zn(2+). The 'KMSKS' region motif lies at 267–271; that stretch reads KMSKS. ATP is bound at residue K270. S271 is subject to Phosphoserine.

It belongs to the class-I aminoacyl-tRNA synthetase family. As to quaternary structure, monomer. It depends on Zn(2+) as a cofactor.

Its subcellular location is the cytoplasm. The catalysed reaction is tRNA(Cys) + L-cysteine + ATP = L-cysteinyl-tRNA(Cys) + AMP + diphosphate. The protein is Cysteine--tRNA ligase of Geobacillus sp. (strain WCH70).